A 430-amino-acid chain; its full sequence is MLDPNLLRNEPDAVAEKLARRGFKLDVDKLGALEERRKVLQVKTENLQAERNSRSKSIGQAKARGEDIEPLRLEVNKLGEELDAAKAELDALQAEIRDIALTIPNLPADEVPVGKDENDNVEVSRWGTPREFDFEVRDHVTLGEMHSGLDFAAAVKLTGSRFVVMKGQIARMHRALAQFMLDLHTEQHGYSENYVPYLVNQDTLYGTGQLPKFAGDLFHTRPLEEEADTSNYALIPTAEVPLTNLVRGEIIDEDDLPIKMTAHTPCFRSEAGSYGRDTRGLIRMHQFDKVEMVQIVRPEDSMAALEEMTGHAEKVLQLLGLPYRKIILCTGDMGFGACKTYDLEVWIPAQNTYREISSCSNVWDFQARRMQARCRSKSDKKTRLVHTLNGSGLAVGRTLVAVMENYQQADGRIEVPEVLRPYMNGLEYIG.

Residue 237-239 (TAE) coordinates L-serine. Position 268–270 (268–270 (RSE)) interacts with ATP. Residue glutamate 291 participates in L-serine binding. Position 355-358 (355-358 (EISS)) interacts with ATP. Position 391 (serine 391) interacts with L-serine.

This sequence belongs to the class-II aminoacyl-tRNA synthetase family. Type-1 seryl-tRNA synthetase subfamily. Homodimer. The tRNA molecule binds across the dimer.

It is found in the cytoplasm. The enzyme catalyses tRNA(Ser) + L-serine + ATP = L-seryl-tRNA(Ser) + AMP + diphosphate + H(+). The catalysed reaction is tRNA(Sec) + L-serine + ATP = L-seryl-tRNA(Sec) + AMP + diphosphate + H(+). Its pathway is aminoacyl-tRNA biosynthesis; selenocysteinyl-tRNA(Sec) biosynthesis; L-seryl-tRNA(Sec) from L-serine and tRNA(Sec): step 1/1. Functionally, catalyzes the attachment of serine to tRNA(Ser). Is also able to aminoacylate tRNA(Sec) with serine, to form the misacylated tRNA L-seryl-tRNA(Sec), which will be further converted into selenocysteinyl-tRNA(Sec). The chain is Serine--tRNA ligase from Escherichia fergusonii (strain ATCC 35469 / DSM 13698 / CCUG 18766 / IAM 14443 / JCM 21226 / LMG 7866 / NBRC 102419 / NCTC 12128 / CDC 0568-73).